Reading from the N-terminus, the 321-residue chain is Bifunctional ligase/repressor BirA (321 aa).

Residues 22–41 (GEQLGETLGMSRAAINKHIQ) constitute a DNA-binding region (H-T-H motif). Residues 67-254 (LNAKQILGQL…ELRAALELFE (188 aa)) enclose the BPL/LPL catalytic domain. Residues 89–91 (STN), Gln-112, 116–118 (RGR), and Lys-183 each bind biotin.

Belongs to the biotin--protein ligase family. Monomer in solution. Interacts with BCCP. Homodimerizes to bind DNA. Interaction with the corepressor bio-5'-AMP increases dimerization.

The enzyme catalyses biotin + L-lysyl-[protein] + ATP = N(6)-biotinyl-L-lysyl-[protein] + AMP + diphosphate + H(+). With respect to regulation, the switch between the enzymatic activity and the repressor activity is regulated by cellular demand for biotin. The switch occurs by swapping of protein interaction partners by holoBirA. In conditions of high biotin demand, holoBirA associates with apoBCCP to transfer biotin. In conditions of low biotin demand, holoBirA dimerizes, binds DNA and represses transcription of the biotin operon. Functionally, acts both as a biotin--[acetyl-CoA-carboxylase] ligase and a biotin-operon repressor. In the presence of ATP, BirA activates biotin to form the BirA-biotinyl-5'-adenylate (BirA-bio-5'-AMP or holoBirA) complex. HoloBirA can either transfer the biotinyl moiety to the biotin carboxyl carrier protein (BCCP) subunit of acetyl-CoA carboxylase, or bind to the biotin operator site and inhibit transcription of the operon. The chain is Bifunctional ligase/repressor BirA from Escherichia coli (strain K12).